A 597-amino-acid polypeptide reads, in one-letter code: Zinc finger CCCH domain-containing protein 29 (597 aa).

ANK repeat units lie at residues 76-106 (EERT…DVNR) and 111-143 (EKVT…SPNC). 2 C3H1-type zinc fingers span residues 254–281 (PYTC…HGVF) and 289–313 (QYRT…HRRD). Residues 320 to 337 (ASTGSAMVSPRSSNQSPE) show a composition bias toward polar residues. The tract at residues 320–341 (ASTGSAMVSPRSSNQSPEMSVM) is disordered.

In terms of tissue distribution, expressed in roots and anthers.

Its subcellular location is the nucleus. In terms of biological role, involved in salt stress response. May positively modulate plant tolerance to salt stress. In Arabidopsis thaliana (Mouse-ear cress), this protein is Zinc finger CCCH domain-containing protein 29.